The primary structure comprises 689 residues: Glycine--tRNA ligase beta subunit (689 aa).

It belongs to the class-II aminoacyl-tRNA synthetase family. As to quaternary structure, tetramer of two alpha and two beta subunits.

It is found in the cytoplasm. The catalysed reaction is tRNA(Gly) + glycine + ATP = glycyl-tRNA(Gly) + AMP + diphosphate. This chain is Glycine--tRNA ligase beta subunit, found in Pectobacterium atrosepticum (strain SCRI 1043 / ATCC BAA-672) (Erwinia carotovora subsp. atroseptica).